We begin with the raw amino-acid sequence, 230 residues long: Cysteine S-methyltransferase OspZ (230 aa).

The segment at 49-52 is interaction with host proteins TAB2, TAB3 and ZRANB3; it reads GITR. Positions 92, 98, 107, 111, 204, and 208 each coordinate S-adenosyl-L-methionine.

Belongs to the NleE/OspZ family. Monomer.

The protein localises to the secreted. It localises to the host cytoplasm. It is found in the host nucleus. The enzyme catalyses L-cysteinyl-[protein] + S-adenosyl-L-methionine = S-methyl-L-cysteinyl-[protein] + S-adenosyl-L-homocysteine + H(+). In terms of biological role, cysteine methyltransferase effector that inhibits host cell NF-kappa-B activation by preventing nuclear translocation of host protein RELA/p65. Acts by mediating cysteine methylation of host proteins TAB2 and TAB3: methylation of a conserved cysteine residue of the RanBP2-type zinc finger (NZF) of TAB2 and TAB3 disrupts zinc-binding, thereby inactivating the ubiquitin chain-binding activity of TAB2 and TAB3, leading to NF-kappa-B inactivation. Also mediates cysteine methylation of host protein ZRANB3, inactivating its ability to bind ubiquitin chains. The sequence is that of Cysteine S-methyltransferase OspZ from Shigella boydii.